A 338-amino-acid polypeptide reads, in one-letter code: MNLNKHPRHPLTFGPTPIQPLKRLSAHLGGKVELYAKREDCNSGLAFGGNKTRKLEYLVPEVLAGGYDTLVSIGGIQSNQTRQVAAVAAHLGLKCVLVQENWVNYADAVYDRVGNIELSRILGADVRLDAAGFDIGIRPSWEQAMEDVRRAGGKPFPIPAGCSEHPLGGLGFVGFAEEVRQQEAEFGFRFDYIVVCSVTGSTQAGMVVGFAADGRADRVIGIDASAKPEQTREQILRIARDTAKLVELGRDITEDDVVLDTRYGGPEYGLPNEGTLEAIRLCARQEGMLTDPVYEGKSMHGMIDRVRGGEFPEGSRVLYAHLGGVPALNAYSFLFRNG.

At K51 the chain carries N6-(pyridoxal phosphate)lysine. Catalysis depends on S78, which acts as the Nucleophile.

The protein belongs to the ACC deaminase/D-cysteine desulfhydrase family. In terms of assembly, homotrimer. Requires pyridoxal 5'-phosphate as cofactor.

It carries out the reaction 1-aminocyclopropane-1-carboxylate + H2O = 2-oxobutanoate + NH4(+). In terms of biological role, catalyzes a cyclopropane ring-opening reaction, the irreversible conversion of 1-aminocyclopropane-1-carboxylate (ACC) to ammonia and alpha-ketobutyrate. Allows growth on ACC as a nitrogen source. The polypeptide is 1-aminocyclopropane-1-carboxylate deaminase (Ralstonia nicotianae (strain ATCC BAA-1114 / GMI1000) (Ralstonia solanacearum)).